Reading from the N-terminus, the 117-residue chain is NADH-ubiquinone oxidoreductase chain 3 (117 aa).

A run of 3 helical transmembrane segments spans residues 2–22 (ILYV…IYLL), 56–76 (FFIL…LFPV), and 85–105 (SPLI…GLLY).

Belongs to the complex I subunit 3 family.

Its subcellular location is the mitochondrion membrane. The catalysed reaction is a ubiquinone + NADH + 5 H(+)(in) = a ubiquinol + NAD(+) + 4 H(+)(out). Its function is as follows. Core subunit of the mitochondrial membrane respiratory chain NADH dehydrogenase (Complex I) that is believed to belong to the minimal assembly required for catalysis. Complex I functions in the transfer of electrons from NADH to the respiratory chain. The immediate electron acceptor for the enzyme is believed to be ubiquinone. This chain is NADH-ubiquinone oxidoreductase chain 3 (ND3), found in Albinaria caerulea (Land snail).